The primary structure comprises 359 residues: Putative nucleotidyltransferase MAB21L1 (359 aa).

A ribonucleoside 5'-triphosphate-binding positions include 23–24 (RK) and 63–66 (YEGL). Mg(2+)-binding residues include glutamate 73 and glutamate 75. A ribonucleoside 5'-triphosphate-binding positions include lysine 248 and 252 to 255 (SLLK).

The protein belongs to the mab-21 family. In terms of assembly, monomer. Homodecamer; composed of 2 back to back homopentamers. The protein may exist as monomer in solution and oiligomerizes upon ligand binding.

Its subcellular location is the nucleus. In terms of biological role, putative nucleotidyltransferase required for several aspects of embryonic development including normal development of the eye. It is unclear whether it displays nucleotidyltransferase activity in vivo. Binds single-stranded RNA (ssRNA). The polypeptide is Putative nucleotidyltransferase MAB21L1 (mab21l1) (Xenopus tropicalis (Western clawed frog)).